We begin with the raw amino-acid sequence, 178 residues long: MNQTENKPKNYTGIVLTLTVLINGLIAVLFFMPKLDQFSHANIHILPMLNAIFNSFTFIFLLAALIMIKQKNIKAHKRFILAAFTTTLLFLICYVTYHSIAENTLYGGEGIMRPIYFFILITHICLSAIIVPLALFTLIRGFSMQVERHKKIARWTMPLWLYVSLTGVIVYLMISPYY.

5 helical membrane-spanning segments follow: residues 13–33 (GIVL…FFMP), 48–68 (MLNA…LIMI), 80–100 (ILAA…YHSI), 115–135 (IYFF…PLAL), and 155–175 (WTMP…LMIS).

Its subcellular location is the cell membrane. This is an uncharacterized protein from Bacillus subtilis (strain 168).